Reading from the N-terminus, the 1462-residue chain is Gag-Pol polyprotein (1462 aa).

Residue Gly-2 is the site of N-myristoyl glycine; by host attachment. Positions 16–22 (WESIRLK) match the Nuclear export signal motif. The Nuclear localization signal signature appears at 26-32 (RKKYLIK). Composition is skewed to polar residues over residues 113–125 (NNST…QRQN) and 135–151 (PSGN…TPSG). The tract at residues 113 to 153 (NNSTATSSGQRQNAGEKEETVPPSGNTGNTGRATETPSGSR) is disordered. Tyr-155 carries the phosphotyrosine; by host modification. 2 CCHC-type zinc fingers span residues 417-434 (LQCF…NCRA) and 438-455 (KGCW…DCTT). A disordered region spans residues 482-513 (EHPREREGSGAGDSTDTSGANCPTTGDDDERR). In terms of domain architecture, Peptidase A2 spans 535–604 (CQALLDTGAD…TPINIIGRNI (70 aa)). Asp-540 (for protease activity; shared with dimeric partner) is an active-site residue. In terms of domain architecture, Reverse transcriptase spans 658–848 (EGKISAVGPE…PPFMWMGYEL (191 aa)). Mg(2+) is bound by residues Asp-724, Asp-799, and Asp-800. The segment at 841–849 (FMWMGYELH) is RT 'primer grip'. A Tryptophan repeat motif motif is present at residues 1012 to 1028 (WSQWWTDYWQVTWVPEW). An RNase H type-1 domain is found at 1048-1171 (IPEAETFYVD…VDKLVSKNIR (124 aa)). Residues Asp-1057, Glu-1092, Asp-1112, and Asp-1163 each coordinate Mg(2+). The Integrase-type zinc-finger motif lies at 1177–1218 (DGINEAQEDHDKYHSNWKALADEYNLPPVVAKEIIAQCPKCH). 4 residues coordinate Zn(2+): His-1186, His-1190, Cys-1214, and Cys-1217. One can recognise an Integrase catalytic domain in the interval 1228-1378 (VDYSPEIWQI…TAGERLLDIL (151 aa)). Mg(2+) is bound by residues Asp-1238 and Asp-1290. A DNA-binding region (integrase-type) is located at residues 1397–1444 (FRVYYRDARDPIWKGPARLLWKGEGAVVIKEGEDIKVVPRRKAKIIKE).

In terms of assembly, homotrimer. Interacts with gp41 (via C-terminus). Homodimer. The active site consists of two apposed aspartic acid residues. As to quaternary structure, heterodimer of p66 RT and p51 RT (RT p66/p51). Heterodimerization of RT is essential for DNA polymerase activity. Despite the sequence identities, p66 RT and p51 RT have distinct folding. In terms of assembly, homotetramer; may further associate as a homohexadecamer. The cofactor is Mg(2+). Specific enzymatic cleavages by the viral protease yield mature proteins. The protease is released by autocatalytic cleavage. The polyprotein is cleaved during and after budding, this process is termed maturation. Proteolytic cleavage of p66 RT removes the RNase H domain to yield the p51 RT subunit. In terms of processing, capsid protein p24 is phosphorylated.

Its subcellular location is the virion. The protein localises to the host nucleus. The protein resides in the host cytoplasm. It is found in the host cell membrane. It carries out the reaction Specific for a P1 residue that is hydrophobic, and P1' variable, but often Pro.. The enzyme catalyses Endohydrolysis of RNA in RNA/DNA hybrids. Three different cleavage modes: 1. sequence-specific internal cleavage of RNA. Human immunodeficiency virus type 1 and Moloney murine leukemia virus enzymes prefer to cleave the RNA strand one nucleotide away from the RNA-DNA junction. 2. RNA 5'-end directed cleavage 13-19 nucleotides from the RNA end. 3. DNA 3'-end directed cleavage 15-20 nucleotides away from the primer terminus.. The catalysed reaction is 3'-end directed exonucleolytic cleavage of viral RNA-DNA hybrid.. It catalyses the reaction DNA(n) + a 2'-deoxyribonucleoside 5'-triphosphate = DNA(n+1) + diphosphate. Its activity is regulated as follows. The viral protease is inhibited by many synthetic protease inhibitors (PIs), such as amprenavir, atazanavir, indinavir, loprinavir, nelfinavir, ritonavir and saquinavir. RT can be inhibited either by nucleoside RT inhibitors (NRTIs) or by non nucleoside RT inhibitors (NNRTIs). NRTIs act as chain terminators, whereas NNRTIs inhibit DNA polymerization by binding a small hydrophobic pocket near the RT active site and inducing an allosteric change in this region. Classical NRTIs are abacavir, adefovir (PMEA), didanosine (ddI), lamivudine (3TC), stavudine (d4T), tenofovir (PMPA), zalcitabine (ddC), and zidovudine (AZT). Classical NNRTIs are atevirdine (BHAP U-87201E), delavirdine, efavirenz (DMP-266), emivirine (I-EBU), and nevirapine (BI-RG-587). The tritherapies used as a basic effective treatment of AIDS associate two NRTIs and one NNRTI. Use of protease inhibitors in tritherapy regimens permit more ambitious therapeutic strategies. Gag-Pol polyprotein and Gag polyprotein may regulate their own translation, by the binding genomic RNA in the 5'-UTR. At low concentration, Gag-Pol and Gag would promote translation, whereas at high concentration, the polyproteins encapsidate genomic RNA and then shut off translation. In terms of biological role, matrix protein p17 has two main functions: in infected cell, it targets Gag and Gag-pol polyproteins to the plasma membrane via a multipartite membrane-binding signal, that includes its myristointegration complex. The myristoylation signal and the NLS exert conflicting influences its subcellular localization. The key regulation of these motifs might be phosphorylation of a portion of MA molecules on the C-terminal tyrosine at the time of virus maturation, by virion-associated cellular tyrosine kinase. Implicated in the release from host cell mediated by Vpu. Functionally, capsid protein p24 forms the conical core that encapsulates the genomic RNA-nucleocapsid complex in the virion. The core is constituted by capsid protein hexamer subunits. The core is disassembled soon after virion entry. Interaction with host PPIA/CYPA protects the virus from restriction by host TRIM5-alpha and from an unknown antiviral activity in host cells. This capsid restriction by TRIM5 is one of the factors which restricts SIV to the simian species. Its function is as follows. Nucleocapsid protein p7 encapsulates and protects viral dimeric unspliced (genomic) RNA. Binds these RNAs through its zinc fingers. Facilitates rearangement of nucleic acid secondary structure during retrotranscription of genomic RNA. This capability is referred to as nucleic acid chaperone activity. The aspartyl protease mediates proteolytic cleavages of Gag and Gag-Pol polyproteins during or shortly after the release of the virion from the plasma membrane. Cleavages take place as an ordered, step-wise cascade to yield mature proteins. This process is called maturation. Displays maximal activity during the budding process just prior to particle release from the cell. Also cleaves Nef and Vif, probably concomitantly with viral structural proteins on maturation of virus particles. Hydrolyzes host EIF4GI and PABP1 in order to shut off the capped cellular mRNA translation. The resulting inhibition of cellular protein synthesis serves to ensure maximal viral gene expression and to evade host immune response. In terms of biological role, reverse transcriptase/ribonuclease H (RT) is a multifunctional enzyme that converts the viral dimeric RNA genome into dsDNA in the cytoplasm, shortly after virus entry into the cell. This enzyme displays a DNA polymerase activity that can copy either DNA or RNA templates, and a ribonuclease H (RNase H) activity that cleaves the RNA strand of RNA-DNA heteroduplexes in a partially processive 3' to 5' endonucleasic mode. Conversion of viral genomic RNA into dsDNA requires many steps. A tRNA binds to the primer-binding site (PBS) situated at the 5'-end of the viral RNA. RT uses the 3' end of the tRNA primer to perform a short round of RNA-dependent minus-strand DNA synthesis. The reading proceeds through the U5 region and ends after the repeated (R) region which is present at both ends of viral RNA. The portion of the RNA-DNA heteroduplex is digested by the RNase H, resulting in a ssDNA product attached to the tRNA primer. This ssDNA/tRNA hybridizes with the identical R region situated at the 3' end of viral RNA. This template exchange, known as minus-strand DNA strong stop transfer, can be either intra- or intermolecular. RT uses the 3' end of this newly synthesized short ssDNA to perform the RNA-dependent minus-strand DNA synthesis of the whole template. RNase H digests the RNA template except for two polypurine tracts (PPTs) situated at the 5'-end and near the center of the genome. It is not clear if both polymerase and RNase H activities are simultaneous. RNase H can probably proceed both in a polymerase-dependent (RNA cut into small fragments by the same RT performing DNA synthesis) and a polymerase-independent mode (cleavage of remaining RNA fragments by free RTs). Secondly, RT performs DNA-directed plus-strand DNA synthesis using the PPTs that have not been removed by RNase H as primers. PPTs and tRNA primers are then removed by RNase H. The 3' and 5' ssDNA PBS regions hybridize to form a circular dsDNA intermediate. Strand displacement synthesis by RT to the PBS and PPT ends produces a blunt ended, linear dsDNA copy of the viral genome that includes long terminal repeats (LTRs) at both ends. Functionally, integrase catalyzes viral DNA integration into the host chromosome, by performing a series of DNA cutting and joining reactions. This enzyme activity takes place after virion entry into a cell and reverse transcription of the RNA genome in dsDNA. The first step in the integration process is 3' processing. This step requires a complex comprising the viral genome, matrix protein, Vpr and integrase. This complex is called the pre-integration complex (PIC). The integrase protein removes 2 nucleotides from each 3' end of the viral DNA, leaving recessed CA OH's at the 3' ends. In the second step, the PIC enters cell nucleus. This process is mediated through integrase and Vpr proteins, and allows the virus to infect a non dividing cell. This ability to enter the nucleus is specific of lentiviruses, other retroviruses cannot and rely on cell division to access cell chromosomes. In the third step, termed strand transfer, the integrase protein joins the previously processed 3' ends to the 5' ends of strands of target cellular DNA at the site of integration. The 5'-ends are produced by integrase-catalyzed staggered cuts, 5 bp apart. A Y-shaped, gapped, recombination intermediate results, with the 5'-ends of the viral DNA strands and the 3' ends of target DNA strands remaining unjoined, flanking a gap of 5 bp. The last step is viral DNA integration into host chromosome. This involves host DNA repair synthesis in which the 5 bp gaps between the unjoined strands are filled in and then ligated. Since this process occurs at both cuts flanking the SIV genome, a 5 bp duplication of host DNA is produced at the ends of SIV integration. Alternatively, Integrase may catalyze the excision of viral DNA just after strand transfer, this is termed disintegration. The sequence is that of Gag-Pol polyprotein (gag-pol) from Simian immunodeficiency virus (isolate TAN1) (SIV-cpz).